Here is a 246-residue protein sequence, read N- to C-terminus: Large ribosomal subunit protein uL30-like 1 (246 aa).

The residue at position 54 (Ser54) is a Phosphoserine.

The protein belongs to the universal ribosomal protein uL30 family.

The polypeptide is Large ribosomal subunit protein uL30-like 1 (RPL7L1) (Pongo abelii (Sumatran orangutan)).